The chain runs to 2737 residues: Non-reducing polyketide synthase ATEG_07661 (2737 aa).

The segment at serine 75 to valine 245 is N-terminal acylcarrier protein transacylase domain (SAT). The active-site Nucleophile; for transacylase activity is the cysteine 154. The active-site Proton donor/acceptor; for transacylase activity is histidine 276. The region spanning asparagine 427–glutamate 854 is the Ketosynthase family 3 (KS3) domain. Catalysis depends on for beta-ketoacyl synthase activity residues cysteine 603, histidine 738, and histidine 777. Residues phenylalanine 969–serine 1260 are malonyl-CoA:ACP transacylase (MAT). An N-terminal hotdog fold region spans residues leucine 1368–aspartate 1503. The PKS/mFAS DH domain occupies leucine 1368–serine 1683. Residues phenylalanine 1399–serine 1681 form a product template (PT) domain region. Histidine 1403 serves as the catalytic Proton acceptor; for dehydratase activity. Positions valine 1535 to serine 1683 are C-terminal hotdog fold. Catalysis depends on aspartate 1592, which acts as the Proton donor; for dehydratase activity. The interval serine 1724–serine 1747 is disordered. Over residues arginine 1725–serine 1739 the composition is skewed to basic residues. The Carrier domain occupies arginine 1750–leucine 1824. Serine 1784 carries the O-(pantetheine 4'-phosphoryl)serine modification. The interval proline 1827–aspartate 1876 is disordered. Over residues isoleucine 1834–serine 1848 the composition is skewed to acidic residues. The span at asparagine 1849–serine 1866 shows a compositional bias: low complexity. Residues alanine 2094 to glycine 2270 form a methyltransferase domain region. Residues valine 2362–valine 2665 are NADPH-binding domain.

Its pathway is secondary metabolite biosynthesis. Its function is as follows. Non-reducing polyketide synthase; part of the cluster B that mediates the biosynthesis of azasperpyranones, members of the azaphilone family that exhibit anti-cancer activities. Azasperpyranones are synthesized by 2 clusters, A and B. Cluster A is responsible for the production of the polyhydric phenol moiety while the azaphilonoid scaffold is produced by the cluster B. The non-reducing polyketide synthase ATEG_03629 produces 5-methyl orsellinic acid, which is then reduced to 5-methyl orsellinic aldehyde by the NRPS-like protein ATEG_03630. 5-methyl orsellinic aldehyde is then first hydroxylated by the FAD-dependent monooxygenase ATEG_03635 and subsequently hydroxylated by the cytochrome P450 monooxygenase ATEG_03631 to produce the unstable polyhydric phenol precursor of azasperpyranones. On the other hand, the polyketide synthase ATEG_07659 is responsible for producing the 3,5-dimethyloctadienone moiety from acetyl-CoA, three malonyl-CoA, and two S-adenosyl methionines (SAM). The 3,5-dimethyloctadienone moiety is then loaded onto the SAT domain of ATEG_07661 and extended with four malonyl-CoA and one SAM, which leads to the formation of 2,4-dihydroxy-6-(5,7-dimethyl-2-oxo-trans-3-trans-5-nonadienyl)-3-methylbenzaldehyde (compound 8) after reductive release and aldol condensation. The FAD-dependent monooxygenase ATEG_07662 is the next enzyme in the biosynthesis sequence and hydroxylates the side chain at the benzylic position of compound 8. In Aspergillus nidulans, afoF, the ortholog of the FAD-dependent oxygenase ATEG_07660, is the key enzyme for the biosynthesis of asperfuranone by catalyzing the hydroxylation at C-8 of to prevent the formation of a six-membered ring hemiacetal intermediate and thus facilitating the formation of a five-membered ring to produce asperfuranone. In Aspergillus terreus, ATEG_07660 is probably not functional, which leads to the formation of the six-membered ring hemiacetal intermediate presperpyranone instead of asperfuranone. Finally, ATEG_03636 is involved in the condensation of the polyhydric phenol moiety produced by cluster A and the perasperpyranone precursor produced by cluster B, to yield azasperpyranone A. Further modifications of azasperpyranone A result in the production of derivatives, including azasperpyranone B to F. The protein is Non-reducing polyketide synthase ATEG_07661 of Aspergillus terreus (strain NIH 2624 / FGSC A1156).